A 293-amino-acid polypeptide reads, in one-letter code: HTH-type transcriptional regulator ArgP (293 aa).

One can recognise an HTH lysR-type domain in the interval 4–60; the sequence is PDYRTLQALDAVIRERGFERAAQKLCITQSAVSQRIKQLENLFGQPLLVRTIPPHPT. Residues 21–40 constitute a DNA-binding region (H-T-H motif); that stretch reads FERAAQKLCITQSAVSQRIK.

It belongs to the LysR transcriptional regulatory family. In terms of assembly, homodimer.

In terms of biological role, controls the transcription of genes involved in arginine and lysine metabolism. In Sodalis glossinidius (strain morsitans), this protein is HTH-type transcriptional regulator ArgP.